We begin with the raw amino-acid sequence, 200 residues long: MSDKFGEGRDPYLYPGLDIMRNRLNIRQQQRLEQAAYEMTALRAATIELGPLVRGLPHLRTIHRQLYQDIFDWAGQLREVDIYQGDTPFCHFAYIEKEGNALMQDLEEEGYLVGLEKAKFVERLAHYYCEINVLHPFRVGSGLAQRIFFEQLAIHAGYQLSWQGIEKEAWNQANQSGAMGDLTALQMIFSKVVSEAGESE.

One can recognise a Fido domain in the interval R54–E195. ATP contacts are provided by residues Q84 to G85, G140 to G142, R146, and Q172.

This sequence belongs to the fic family.

The catalysed reaction is L-tyrosyl-[protein] + ATP = O-(5'-adenylyl)-L-tyrosyl-[protein] + diphosphate. It catalyses the reaction L-threonyl-[protein] + ATP = 3-O-(5'-adenylyl)-L-threonyl-[protein] + diphosphate. In terms of biological role, probable adenylyltransferase that mediates the addition of adenosine 5'-monophosphate (AMP) to specific residues of target proteins. Involved in cell filamentation induced by cyclic AMP. May have some role in cell division. This is Probable protein adenylyltransferase Fic (fic) from Escherichia coli (strain K12).